Consider the following 290-residue polypeptide: Putative transport permease ycf38 (290 aa).

Transmembrane regions (helical) follow at residues 21–41 (VTSF…FIQL), 46–66 (ITLI…GALF), 86–106 (PGIL…PLIF), 133–153 (FFIS…GVFL), 167–187 (FFFL…LALL), 194–213 (LIAV…TALA), and 261–281 (INIG…FLLF). One can recognise an ABC transmembrane type-2 domain in the interval 46–284 (ITLISGILQP…LVGFLLFKKI (239 aa)).

Belongs to the ABC-2 integral membrane protein family.

Its subcellular location is the plastid. It localises to the cyanelle membrane. In Cyanophora paradoxa, this protein is Putative transport permease ycf38 (ycf38).